Here is a 305-residue protein sequence, read N- to C-terminus: Cytochrome c biogenesis protein CcsA (305 aa).

A run of 8 helical transmembrane segments spans residues 11-31, 36-56, 75-95, 97-117, 142-162, 212-232, 239-259, and 273-293; these read ANAS…KAIF, ILQL…ALLL, LMFL…YIQI, FIGF…TFFL, IMMA…AFLF, TIGI…VWAN, WSWD…AIYL, and AIVA…VNLL.

This sequence belongs to the CcmF/CycK/Ccl1/NrfE/CcsA family. In terms of assembly, may interact with Ccs1.

The protein localises to the plastid. It localises to the chloroplast thylakoid membrane. Required during biogenesis of c-type cytochromes (cytochrome c6 and cytochrome f) at the step of heme attachment. The polypeptide is Cytochrome c biogenesis protein CcsA (Mesostigma viride (Green alga)).